Consider the following 269-residue polypeptide: Voltage-gated hydrogen channel 1 (269 aa).

Topologically, residues 1-96 (MTSHDPKAVT…RLRKLFSSHR (96 aa)) are cytoplasmic. Threonine 29 is modified (phosphothreonine). The segment at 46–79 (ENEEEEEEPAPTSAEGEGNAEGPDAEAGSASTPR) is disordered. Serine 93 is modified (phosphoserine). Residues 97 to 117 (FQVIIICLVVLDALLVLAELL) traverse the membrane as a helical segment. At 118-134 (LDLKIIEPDEQDYAVTA) the chain is on the extracellular side. Residues 135–157 (FHYMSFAILVFFMLEIFFKIFVF) form a helical membrane-spanning segment. Over 158–165 (RLEFFHHK) the chain is Cytoplasmic. The chain crosses the membrane as a helical span at residues 166–186 (FEILDAFVVVVSFVLDLVLLF). Over 187–193 (KSHHFEA) the chain is Extracellular. Residues 194–214 (LGLLILLRLWRVARIINGIII) form a helical membrane-spanning segment. The Cytoplasmic segment spans residues 215 to 269 (SVKTRSERQILRLKQINIQLATKIQHLEFSCSEKEQEIERLNKLLKQNGLLGDVN). Residues 221-261 (ERQILRLKQINIQLATKIQHLEFSCSEKEQEIERLNKLLKQ) are a coiled coil.

The protein belongs to the voltage-gated proton channel (VPC) (TC 1.A.51) family. Homodimer; each protomer forms its own proton conduction pathway. Phosphorylated in vitro by PRKCD. Phosphorylation may enhance channel gating. As to expression, enriched in immune tissues, such as bone marrow, macrophages and spleen.

Its subcellular location is the cell membrane. The protein resides in the apical cell membrane. It is found in the cytoplasmic vesicle. The protein localises to the phagosome membrane. It localises to the cell projection. Its subcellular location is the cilium. The protein resides in the flagellum membrane. It catalyses the reaction H(+)(in) = H(+)(out). The dimers display cooperative channel gating. The channel activity is inhibited by zinc ions. In terms of biological role, voltage-gated proton-selective channel that conducts outward proton currents in response to intracellular acidification. Lacks a canonical ion-channel pore domain and mediates proton permeability via its voltage sensor domain. Provides for proton efflux that compensates for electron charge generated by NADPH oxidase activity either in the extracellular or phagosomal compartments, thus enabling the production of high levels of bactericidal reactive oxygen species during the respiratory burst. Opens when the pH of airway surface liquid exceeds 7 and contributes to respiratory epithelial acid secretion to maintain pH in the mucosa. This chain is Voltage-gated hydrogen channel 1, found in Mus musculus (Mouse).